The primary structure comprises 278 residues: Digeranylgeranylglyceryl phosphate synthase (278 aa).

A run of 7 helical transmembrane segments spans residues 12-32 (LKNC…ASNF), 34-54 (FGAL…CGFG), 92-112 (IMIF…MAVL), 129-149 (IIGN…GGIA), 199-219 (IYIS…PYLT), 221-241 (IFGI…LAGF), and 257-277 (SKNI…GSIF).

The protein belongs to the UbiA prenyltransferase family. DGGGP synthase subfamily. It depends on Mg(2+) as a cofactor.

Its subcellular location is the cell membrane. The catalysed reaction is sn-3-O-(geranylgeranyl)glycerol 1-phosphate + (2E,6E,10E)-geranylgeranyl diphosphate = 2,3-bis-O-(geranylgeranyl)-sn-glycerol 1-phosphate + diphosphate. It functions in the pathway membrane lipid metabolism; glycerophospholipid metabolism. Functionally, prenyltransferase that catalyzes the transfer of the geranylgeranyl moiety of geranylgeranyl diphosphate (GGPP) to the C2 hydroxyl of (S)-3-O-geranylgeranylglyceryl phosphate (GGGP). This reaction is the second ether-bond-formation step in the biosynthesis of archaeal membrane lipids. In Methanococcus vannielii (strain ATCC 35089 / DSM 1224 / JCM 13029 / OCM 148 / SB), this protein is Digeranylgeranylglyceryl phosphate synthase.